The sequence spans 54 residues: ATP synthase F(0) complex subunit 8 (54 aa).

The helical transmembrane segment at Trp9–Ile29 threads the bilayer. Residues Asn35–Trp54 form a disordered region.

This sequence belongs to the ATPase protein 8 family. As to quaternary structure, component of the ATP synthase complex composed at least of ATP5F1A/subunit alpha, ATP5F1B/subunit beta, ATP5MC1/subunit c (homooctomer), MT-ATP6/subunit a, MT-ATP8/subunit 8, ATP5ME/subunit e, ATP5MF/subunit f, ATP5MG/subunit g, ATP5MK/subunit k, ATP5MJ/subunit j, ATP5F1C/subunit gamma, ATP5F1D/subunit delta, ATP5F1E/subunit epsilon, ATP5PF/subunit F6, ATP5PB/subunit b, ATP5PD/subunit d, ATP5PO/subunit OSCP. ATP synthase complex consists of a soluble F(1) head domain (subunits alpha(3) and beta(3)) - the catalytic core - and a membrane F(0) domain - the membrane proton channel (subunits c, a, 8, e, f, g, k and j). These two domains are linked by a central stalk (subunits gamma, delta, and epsilon) rotating inside the F1 region and a stationary peripheral stalk (subunits F6, b, d, and OSCP).

The protein localises to the mitochondrion membrane. Functionally, subunit 8, of the mitochondrial membrane ATP synthase complex (F(1)F(0) ATP synthase or Complex V) that produces ATP from ADP in the presence of a proton gradient across the membrane which is generated by electron transport complexes of the respiratory chain. ATP synthase complex consist of a soluble F(1) head domain - the catalytic core - and a membrane F(1) domain - the membrane proton channel. These two domains are linked by a central stalk rotating inside the F(1) region and a stationary peripheral stalk. During catalysis, ATP synthesis in the catalytic domain of F(1) is coupled via a rotary mechanism of the central stalk subunits to proton translocation. In vivo, can only synthesize ATP although its ATP hydrolase activity can be activated artificially in vitro. Part of the complex F(0) domain. The sequence is that of ATP synthase F(0) complex subunit 8 from Danio rerio (Zebrafish).